A 329-amino-acid chain; its full sequence is Transposable element Tc3 transposase (329 aa).

Residues 2–135 (PRGSALSDTE…LEFAKNNMGT (134 aa)) mediate DNA binding.

Belongs to the transposase 5 family. In terms of assembly, homodimer or homotetramer.

It is found in the nucleus. Functionally, binds specifically to the terminal nucleotides of the TC3 inverted repeat. Its expression results in frequent excision and transposition of endogenous TC3 elements. TC3 transposase acts by making double strand breaks at the ends of TC3 element. The excised element would then be inserted into a target sequence. The chain is Transposable element Tc3 transposase (tc3a) from Caenorhabditis elegans.